A 150-amino-acid polypeptide reads, in one-letter code: Large ribosomal subunit protein bL9 (150 aa).

It belongs to the bacterial ribosomal protein bL9 family.

Its function is as follows. Binds to the 23S rRNA. In Polaromonas naphthalenivorans (strain CJ2), this protein is Large ribosomal subunit protein bL9.